The primary structure comprises 616 residues: Dihydroxy-acid dehydratase (616 aa).

Asp81 lines the Mg(2+) pocket. Cys122 is a binding site for [2Fe-2S] cluster. Mg(2+) is bound by residues Asp123 and Lys124. Lys124 is subject to N6-carboxylysine. Cys195 contacts [2Fe-2S] cluster. A Mg(2+)-binding site is contributed by Glu491. The active-site Proton acceptor is the Ser517.

This sequence belongs to the IlvD/Edd family. In terms of assembly, homodimer. [2Fe-2S] cluster is required as a cofactor. The cofactor is Mg(2+).

It carries out the reaction (2R)-2,3-dihydroxy-3-methylbutanoate = 3-methyl-2-oxobutanoate + H2O. The catalysed reaction is (2R,3R)-2,3-dihydroxy-3-methylpentanoate = (S)-3-methyl-2-oxopentanoate + H2O. It functions in the pathway amino-acid biosynthesis; L-isoleucine biosynthesis; L-isoleucine from 2-oxobutanoate: step 3/4. Its pathway is amino-acid biosynthesis; L-valine biosynthesis; L-valine from pyruvate: step 3/4. Functionally, functions in the biosynthesis of branched-chain amino acids. Catalyzes the dehydration of (2R,3R)-2,3-dihydroxy-3-methylpentanoate (2,3-dihydroxy-3-methylvalerate) into 2-oxo-3-methylpentanoate (2-oxo-3-methylvalerate) and of (2R)-2,3-dihydroxy-3-methylbutanoate (2,3-dihydroxyisovalerate) into 2-oxo-3-methylbutanoate (2-oxoisovalerate), the penultimate precursor to L-isoleucine and L-valine, respectively. This Sodalis glossinidius (strain morsitans) protein is Dihydroxy-acid dehydratase.